A 186-amino-acid chain; its full sequence is Elongation factor P (186 aa).

Belongs to the elongation factor P family.

It is found in the cytoplasm. Its pathway is protein biosynthesis; polypeptide chain elongation. In terms of biological role, involved in peptide bond synthesis. Stimulates efficient translation and peptide-bond synthesis on native or reconstituted 70S ribosomes in vitro. Probably functions indirectly by altering the affinity of the ribosome for aminoacyl-tRNA, thus increasing their reactivity as acceptors for peptidyl transferase. The protein is Elongation factor P of Cupriavidus pinatubonensis (strain JMP 134 / LMG 1197) (Cupriavidus necator (strain JMP 134)).